Consider the following 296-residue polypeptide: tRNA dimethylallyltransferase (296 aa).

9 to 16 contributes to the ATP binding site; that stretch reads GTTASGKS. Substrate is bound at residue 11–16; it reads TASGKS. The segment at 34 to 37 is interaction with substrate tRNA; sequence DSLA.

The protein belongs to the IPP transferase family. Monomer. Mg(2+) is required as a cofactor.

It carries out the reaction adenosine(37) in tRNA + dimethylallyl diphosphate = N(6)-dimethylallyladenosine(37) in tRNA + diphosphate. In terms of biological role, catalyzes the transfer of a dimethylallyl group onto the adenine at position 37 in tRNAs that read codons beginning with uridine, leading to the formation of N6-(dimethylallyl)adenosine (i(6)A). The polypeptide is tRNA dimethylallyltransferase (Campylobacter curvus (strain 525.92)).